We begin with the raw amino-acid sequence, 480 residues long: Aspartyl/glutamyl-tRNA(Asn/Gln) amidotransferase subunit B (480 aa).

It belongs to the GatB/GatE family. GatB subfamily. As to quaternary structure, heterotrimer of A, B and C subunits.

It carries out the reaction L-glutamyl-tRNA(Gln) + L-glutamine + ATP + H2O = L-glutaminyl-tRNA(Gln) + L-glutamate + ADP + phosphate + H(+). It catalyses the reaction L-aspartyl-tRNA(Asn) + L-glutamine + ATP + H2O = L-asparaginyl-tRNA(Asn) + L-glutamate + ADP + phosphate + 2 H(+). Functionally, allows the formation of correctly charged Asn-tRNA(Asn) or Gln-tRNA(Gln) through the transamidation of misacylated Asp-tRNA(Asn) or Glu-tRNA(Gln) in organisms which lack either or both of asparaginyl-tRNA or glutaminyl-tRNA synthetases. The reaction takes place in the presence of glutamine and ATP through an activated phospho-Asp-tRNA(Asn) or phospho-Glu-tRNA(Gln). The polypeptide is Aspartyl/glutamyl-tRNA(Asn/Gln) amidotransferase subunit B (Streptococcus pneumoniae (strain 70585)).